Consider the following 1443-residue polypeptide: DNA polymerase III PolC-type (1443 aa).

An Exonuclease domain is found at 408-567; it reads FVIFDIETTG…YDTQALKKVF (160 aa).

Belongs to the DNA polymerase type-C family. PolC subfamily.

It localises to the cytoplasm. It carries out the reaction DNA(n) + a 2'-deoxyribonucleoside 5'-triphosphate = DNA(n+1) + diphosphate. Required for replicative DNA synthesis. This DNA polymerase also exhibits 3' to 5' exonuclease activity. The polypeptide is DNA polymerase III PolC-type (Mycoplasma pneumoniae (strain ATCC 29342 / M129 / Subtype 1) (Mycoplasmoides pneumoniae)).